A 378-amino-acid polypeptide reads, in one-letter code: Plant intracellular Ras-group-related LRR protein 8 (378 aa).

Residues 10-86 (PTITVQVKFG…VMLMASQGLH (77 aa)) form the Ubiquitin-like domain. A disordered region spans residues 85 to 120 (LHQGDGPITKNSSVPAPSTRRASNVKEAQIQKSDTN). Residues 93–106 (TKNSSVPAPSTRRA) are compositionally biased toward polar residues. LRR repeat units follow at residues 129-152 (WKAT…VWGC), 153-176 (GSSI…IAAL), 178-201 (SLQK…GLTC), 202-225 (VQTL…LGSI), 226-250 (THLR…LLKH), 252-271 (EILI…IGGC), 272-293 (ESLN…AFGN), 294-317 (LQHL…FFIK), and 319-344 (SQLI…GWEE).

The protein belongs to the SHOC2 family. In terms of tissue distribution, widely expressed except in panicles.

In terms of biological role, leucine-rich repeat protein that likely mediates protein interactions, possibly in the context of signal transduction. The chain is Plant intracellular Ras-group-related LRR protein 8 (IRL8) from Oryza sativa subsp. japonica (Rice).